We begin with the raw amino-acid sequence, 512 residues long: Maturase K (512 aa).

The protein belongs to the intron maturase 2 family. MatK subfamily.

It is found in the plastid. Its subcellular location is the chloroplast. Usually encoded in the trnK tRNA gene intron. Probably assists in splicing its own and other chloroplast group II introns. The polypeptide is Maturase K (Alisma canaliculatum (Water plantain)).